An 80-amino-acid chain; its full sequence is Exodeoxyribonuclease 7 small subunit (80 aa).

Belongs to the XseB family. Heterooligomer composed of large and small subunits.

It is found in the cytoplasm. The enzyme catalyses Exonucleolytic cleavage in either 5'- to 3'- or 3'- to 5'-direction to yield nucleoside 5'-phosphates.. In terms of biological role, bidirectionally degrades single-stranded DNA into large acid-insoluble oligonucleotides, which are then degraded further into small acid-soluble oligonucleotides. The polypeptide is Exodeoxyribonuclease 7 small subunit (Pseudomonas putida (strain ATCC 700007 / DSM 6899 / JCM 31910 / BCRC 17059 / LMG 24140 / F1)).